Here is a 332-residue protein sequence, read N- to C-terminus: Transaldolase (332 aa).

The active-site Schiff-base intermediate with substrate is Lys136.

This sequence belongs to the transaldolase family. Type 1 subfamily.

The protein resides in the cytoplasm. It catalyses the reaction D-sedoheptulose 7-phosphate + D-glyceraldehyde 3-phosphate = D-erythrose 4-phosphate + beta-D-fructose 6-phosphate. Its pathway is carbohydrate degradation; pentose phosphate pathway; D-glyceraldehyde 3-phosphate and beta-D-fructose 6-phosphate from D-ribose 5-phosphate and D-xylulose 5-phosphate (non-oxidative stage): step 2/3. Its function is as follows. Transaldolase is important for the balance of metabolites in the pentose-phosphate pathway. This chain is Transaldolase, found in Trichormus variabilis (strain ATCC 29413 / PCC 7937) (Anabaena variabilis).